Reading from the N-terminus, the 312-residue chain is Non-structural protein 12A (312 aa).

A compositionally biased stretch (low complexity) spans 1–23 (MFKSGSGSLKRSGSISSVKSFSG). 3 disordered regions span residues 1–37 (MFKS…RGSV), 63–97 (VPEK…YNQN), and 114–162 (KGRG…TGDG). Residues 63-73 (VPEKTKSEGNL) are compositionally biased toward basic and acidic residues. A compositionally biased stretch (polar residues) spans 74-97 (KNKSSVITGNFESSGPTNAHYNQN). The segment covering 122–134 (DARHTATDSRLSQ) has biased composition (basic and acidic residues).

It belongs to the phytoreovirus non-structural protein Pns12A family.

It is found in the host cytoplasm. Constituent of viral factories. The sequence is that of Non-structural protein 12A from Rice dwarf virus (isolate Fujian) (RDV).